Here is a 318-residue protein sequence, read N- to C-terminus: CRISPR-associated endonuclease Cas1 1 (318 aa).

The Mn(2+) site is built by glutamate 160, histidine 225, and glutamate 240.

The protein belongs to the CRISPR-associated endonuclease Cas1 family. As to quaternary structure, homodimer, forms a heterotetramer with a Cas2 homodimer. Mg(2+) serves as cofactor. Requires Mn(2+) as cofactor.

Its function is as follows. CRISPR (clustered regularly interspaced short palindromic repeat), is an adaptive immune system that provides protection against mobile genetic elements (viruses, transposable elements and conjugative plasmids). CRISPR clusters contain spacers, sequences complementary to antecedent mobile elements, and target invading nucleic acids. CRISPR clusters are transcribed and processed into CRISPR RNA (crRNA). Acts as a dsDNA endonuclease. Involved in the integration of spacer DNA into the CRISPR cassette. This chain is CRISPR-associated endonuclease Cas1 1, found in Thermodesulfovibrio yellowstonii (strain ATCC 51303 / DSM 11347 / YP87).